The chain runs to 210 residues: HTH-type transcriptional repressor FabR (210 aa).

In terms of domain architecture, HTH tetR-type spans Lys10–Leu70. The segment at residues Ser33–Phe52 is a DNA-binding region (H-T-H motif).

As to quaternary structure, homodimer.

It is found in the cytoplasm. Its function is as follows. Represses the transcription of fabB, involved in unsaturated fatty acid (UFA) biosynthesis. By controlling UFA production, FabR directly influences the physical properties of the membrane bilayer. The sequence is that of HTH-type transcriptional repressor FabR from Salmonella paratyphi A (strain ATCC 9150 / SARB42).